We begin with the raw amino-acid sequence, 530 residues long: Metal transporter Nramp5 (530 aa).

The span at 1–10 shows a compositional bias: polar residues; sequence MTGSTVSRQE. A disordered region spans residues 1–53; that stretch reads MTGSTVSRQENSPKRPNDSNGEFKRLLVPETSQPEEDELHESPPENQILNVEE. A compositionally biased stretch (basic and acidic residues) spans 11-27; the sequence is NSPKRPNDSNGEFKRLL. A run of 12 helical transmembrane segments spans residues 65 to 85, 98 to 118, 147 to 167, 179 to 199, 207 to 227, 253 to 273, 299 to 319, 341 to 361, 387 to 407, 429 to 449, 458 to 478, and 485 to 505; these read FSWA…IAFL, AVAG…GLLM, ILLW…EVIG, FLPI…ISYL, LEGL…WMFN, AVGV…SALV, AALF…AKGF, YGGG…AAGQ, LSAF…AIMF, IPFA…MGVF, LAWT…LDFF, and FLVG…IIYL.

It belongs to the NRAMP (TC 2.A.55) family.

Its subcellular location is the membrane. Its function is as follows. Seems to be involved in iron uptake. In Arabidopsis thaliana (Mouse-ear cress), this protein is Metal transporter Nramp5 (NRAMP5).